The sequence spans 267 residues: Hydroxyethylthiazole kinase 2 (267 aa).

Methionine 41 serves as a coordination point for substrate. Positions 116 and 166 each coordinate ATP. Substrate is bound at residue glycine 193.

Belongs to the Thz kinase family. Requires Mg(2+) as cofactor.

The catalysed reaction is 5-(2-hydroxyethyl)-4-methylthiazole + ATP = 4-methyl-5-(2-phosphooxyethyl)-thiazole + ADP + H(+). It functions in the pathway cofactor biosynthesis; thiamine diphosphate biosynthesis; 4-methyl-5-(2-phosphoethyl)-thiazole from 5-(2-hydroxyethyl)-4-methylthiazole: step 1/1. Catalyzes the phosphorylation of the hydroxyl group of 4-methyl-5-beta-hydroxyethylthiazole (THZ). This Streptococcus pneumoniae serotype 4 (strain ATCC BAA-334 / TIGR4) protein is Hydroxyethylthiazole kinase 2.